The sequence spans 101 residues: Putative regulatory protein Csac_2087 (101 aa).

This sequence belongs to the RemA family.

The protein is Putative regulatory protein Csac_2087 of Caldicellulosiruptor saccharolyticus (strain ATCC 43494 / DSM 8903 / Tp8T 6331).